The primary structure comprises 543 residues: Chaperonin GroEL (543 aa).

ATP is bound by residues 29-32, 86-90, G413, 478-480, and D494; these read TIGP, DGTTT, and NAA.

It belongs to the chaperonin (HSP60) family. Forms a cylinder of 14 subunits composed of two heptameric rings stacked back-to-back. Interacts with the co-chaperonin GroES.

It is found in the cytoplasm. The catalysed reaction is ATP + H2O + a folded polypeptide = ADP + phosphate + an unfolded polypeptide.. Together with its co-chaperonin GroES, plays an essential role in assisting protein folding. The GroEL-GroES system forms a nano-cage that allows encapsulation of the non-native substrate proteins and provides a physical environment optimized to promote and accelerate protein folding. The sequence is that of Chaperonin GroEL from Limosilactobacillus fermentum (strain NBRC 3956 / LMG 18251) (Lactobacillus fermentum).